Consider the following 505-residue polypeptide: Phosphomevalonate kinase, peroxisomal (505 aa).

A2 bears the N-acetylalanine mark. The Peroxisomal targeting signal PTS2 signature appears at 57 to 65; sequence DVKLTSPQL. ATP is bound at residue 177–187; sequence VAKTGLGSSAA.

This sequence belongs to the GHMP kinase family. Mevalonate kinase subfamily.

It is found in the peroxisome. It catalyses the reaction (R)-5-phosphomevalonate + ATP = (R)-5-diphosphomevalonate + ADP. Its pathway is isoprenoid biosynthesis; isopentenyl diphosphate biosynthesis via mevalonate pathway; isopentenyl diphosphate from (R)-mevalonate: step 2/3. In Arabidopsis thaliana (Mouse-ear cress), this protein is Phosphomevalonate kinase, peroxisomal.